We begin with the raw amino-acid sequence, 203 residues long: Shikimate kinase (203 aa).

Position 38-43 (38-43 (GAGKST)) interacts with ATP. Residue S42 coordinates Mg(2+). Positions 60, 84, and 106 each coordinate substrate. Residue R144 coordinates ATP. Residue R163 coordinates substrate.

It belongs to the shikimate kinase family. As to quaternary structure, monomer. It depends on Mg(2+) as a cofactor.

Its subcellular location is the cytoplasm. It carries out the reaction shikimate + ATP = 3-phosphoshikimate + ADP + H(+). Its pathway is metabolic intermediate biosynthesis; chorismate biosynthesis; chorismate from D-erythrose 4-phosphate and phosphoenolpyruvate: step 5/7. In terms of biological role, catalyzes the specific phosphorylation of the 3-hydroxyl group of shikimic acid using ATP as a cosubstrate. This Rhodopseudomonas palustris (strain ATCC BAA-98 / CGA009) protein is Shikimate kinase.